The sequence spans 302 residues: Bifunctional protein FolD (302 aa).

Residues 165-167 (GRS), S190, and I231 contribute to the NADP(+) site.

This sequence belongs to the tetrahydrofolate dehydrogenase/cyclohydrolase family. Homodimer.

It catalyses the reaction (6R)-5,10-methylene-5,6,7,8-tetrahydrofolate + NADP(+) = (6R)-5,10-methenyltetrahydrofolate + NADPH. It carries out the reaction (6R)-5,10-methenyltetrahydrofolate + H2O = (6R)-10-formyltetrahydrofolate + H(+). Its pathway is one-carbon metabolism; tetrahydrofolate interconversion. In terms of biological role, catalyzes the oxidation of 5,10-methylenetetrahydrofolate to 5,10-methenyltetrahydrofolate and then the hydrolysis of 5,10-methenyltetrahydrofolate to 10-formyltetrahydrofolate. The polypeptide is Bifunctional protein FolD (Prochlorococcus marinus (strain MIT 9313)).